The primary structure comprises 227 residues: Charged multivesicular body protein 4c (227 aa).

Residues 1 to 27 form a disordered region; the sequence is MSKITKLFKSSGGSGSSSKNRKGPSAQ. Coiled-coil stretches lie at residues 32–94 and 129–187; these read KLRE…STIE and LEKI…MANV. The segment at 178–227 is disordered; sequence EDLNSQMANVNLPSVPSSKLPSTKLPSRPASSRKKVEDDDDMQMLAAWAT. A compositionally biased stretch (low complexity) spans 189–206; the sequence is LPSVPSSKLPSTKLPSRP.

It belongs to the SNF7 family. In terms of assembly, probable core component of the endosomal sorting required for transport complex III (ESCRT-III). ESCRT-III components are thought to multimerize to form a flat lattice on the perimeter membrane of the endosome.

The protein resides in the cytoplasm. The protein localises to the cytosol. It localises to the late endosome membrane. Its function is as follows. Probable core component of the endosomal sorting required for transport complex III (ESCRT-III) which is involved in multivesicular bodies (MVBs) formation and sorting of endosomal cargo proteins into MVBs. MVBs contain intraluminal vesicles (ILVs) that are generated by invagination and scission from the limiting membrane of the endosome and mostly are delivered to lysosomes enabling degradation of membrane proteins, such as stimulated growth factor receptors, lysosomal enzymes and lipids. Key component of the cytokinesis checkpoint, a process required to delay abscission to prevent both premature resolution of intercellular chromosome bridges and accumulation of DNA damage. The protein is Charged multivesicular body protein 4c (chmp4c) of Xenopus laevis (African clawed frog).